The chain runs to 603 residues: uncharacterized protein (603 aa).

The PE domain occupies 1 to 93 (MSFVIAAPET…AGAYASAEAA (93 aa)).

This sequence belongs to the mycobacterial PE family. PGRS subfamily.

This is an uncharacterized protein from Mycobacterium tuberculosis (strain ATCC 25618 / H37Rv).